A 686-amino-acid polypeptide reads, in one-letter code: Rhophilin-2 (686 aa).

The REM-1 domain maps to 26–100; sequence NPLAQTGRSK…LEGLNISVGV (75 aa). Residues 46–66 are interaction with Rho; sequence QILKAMRMRTGAENLLKAATN. The BRO1 domain maps to 111 to 460; that stretch reads PLIPLGLKET…QLKYTQLRED (350 aa). Residues 515–593 form the PDZ domain; sequence RSIHFTAEEG…DDIEMKVVSL (79 aa). A Phosphothreonine modification is found at Thr655.

Belongs to the RHPN family. In terms of assembly, interacts with GTP-bound RhoA and RhoB. Interacts with both GTP- and GDP-bound RhoA. Interacts with KRT18.

It localises to the cytoplasm. The protein localises to the perinuclear region. In terms of biological role, binds specifically to GTP-Rho. May function in a Rho pathway to limit stress fiber formation and/or increase the turnover of F-actin structures in the absence of high levels of RhoA activity. The protein is Rhophilin-2 (RHPN2) of Bos taurus (Bovine).